Reading from the N-terminus, the 1017-residue chain is DNA polymerase (1017 aa).

This sequence belongs to the DNA polymerase type-B family. Heterodimer with the terminal protein; this heterodimer binds to bp 9 to 18 of the genome. Forms a complex with viral pTP, DBP and hosts NFIA and POU2F1/OCT1 for initiation of replication.

It is found in the host nucleus. The catalysed reaction is DNA(n) + a 2'-deoxyribonucleoside 5'-triphosphate = DNA(n+1) + diphosphate. In terms of biological role, eukaryotic-type DNA polymerase involved in viral genomic replication. DNA synthesis is protein primed, and acts in a strand displacement replication. Assembles in complex with viral pTP, DBP, host NFIA and host POU2F1/OCT1 on viral origin of replication. The polymerase covalently transfers dCMP onto pTP, thereby initiating complementary strand synthesis. The chain is DNA polymerase from Bovine adenovirus 2 (BAdV-2).